The following is a 241-amino-acid chain: uncharacterized protein (241 aa).

The next 6 membrane-spanning stretches (helical) occupy residues 1–21 (MMMA…GILL), 43–63 (FPII…LKNL), 75–95 (LPIY…FYAI), 108–128 (IYVL…VLML), 160–180 (VLTS…HGLL), and 200–220 (ILVI…IASG).

To M.jannaschii MJ0871, MJ0880 and MJ1556.

The protein localises to the cell membrane. This is an uncharacterized protein from Methanocaldococcus jannaschii (strain ATCC 43067 / DSM 2661 / JAL-1 / JCM 10045 / NBRC 100440) (Methanococcus jannaschii).